Consider the following 321-residue polypeptide: Glucokinase (321 aa).

8-13 (GDVGGT) contacts ATP.

Belongs to the bacterial glucokinase family.

The protein resides in the cytoplasm. It carries out the reaction D-glucose + ATP = D-glucose 6-phosphate + ADP + H(+). The chain is Glucokinase from Cronobacter sakazakii (strain ATCC BAA-894) (Enterobacter sakazakii).